Reading from the N-terminus, the 37-residue chain is Cytochrome b6-f complex subunit 5 (37 aa).

Residues 5-25 form a helical membrane-spanning segment; that stretch reads FLFGIVLGLIPITLAGLFVTA.

This sequence belongs to the PetG family. The 4 large subunits of the cytochrome b6-f complex are cytochrome b6, subunit IV (17 kDa polypeptide, PetD), cytochrome f and the Rieske protein, while the 4 small subunits are PetG, PetL, PetM and PetN. The complex functions as a dimer.

The protein resides in the plastid. It is found in the chloroplast thylakoid membrane. Component of the cytochrome b6-f complex, which mediates electron transfer between photosystem II (PSII) and photosystem I (PSI), cyclic electron flow around PSI, and state transitions. PetG is required for either the stability or assembly of the cytochrome b6-f complex. In Capsella bursa-pastoris (Shepherd's purse), this protein is Cytochrome b6-f complex subunit 5.